The following is a 212-amino-acid chain: Deoxyribose-phosphate aldolase (212 aa).

The active-site Proton donor/acceptor is the Asp89. Lys151 (schiff-base intermediate with acetaldehyde) is an active-site residue. Lys180 serves as the catalytic Proton donor/acceptor.

This sequence belongs to the DeoC/FbaB aldolase family. DeoC type 1 subfamily.

It is found in the cytoplasm. It catalyses the reaction 2-deoxy-D-ribose 5-phosphate = D-glyceraldehyde 3-phosphate + acetaldehyde. It participates in carbohydrate degradation; 2-deoxy-D-ribose 1-phosphate degradation; D-glyceraldehyde 3-phosphate and acetaldehyde from 2-deoxy-alpha-D-ribose 1-phosphate: step 2/2. Functionally, catalyzes a reversible aldol reaction between acetaldehyde and D-glyceraldehyde 3-phosphate to generate 2-deoxy-D-ribose 5-phosphate. This Clostridium botulinum (strain Loch Maree / Type A3) protein is Deoxyribose-phosphate aldolase.